Consider the following 420-residue polypeptide: MTKWKRANPNGTRDYLFEECTLIEEVEQKLRRTFLERGYEEIRTPTIEFYDVFAFQSRPIDEEKMYKFFDEKGRIIVLRPDMTIPLARVVGTQRCDTPLKVTYSGNVFRANESLAGKYNEIVQSGIEVIGIDNVRAEIECVISVIQSLQKLKVQSFTIEIGQVQLYKCIVKKLSIHEEEEKVLRTYIESKNYASLSNFIRDKKLDRCDETVKLLEKLPRLFGNLEVIEEAEKLASSNEMKMAITRVKEIYEAIEKLGYGSYISIDLGMIQHLDYYTGVIFKGYIYEIGEEIVSGGRYDELIGNFGEMLPAVGLAVQVNQIVKALQEQQEPYERKRIDIMIHYELNRLAEAERLRNLFQKDGKKVALSLFSNLNDTFQFARKNQIVTVVEAKSESLVEYVWKEKWVVQKEGETSCVTFKLR.

This sequence belongs to the class-II aminoacyl-tRNA synthetase family. HisZ subfamily. As to quaternary structure, heteromultimer composed of HisG and HisZ subunits.

Its subcellular location is the cytoplasm. It functions in the pathway amino-acid biosynthesis; L-histidine biosynthesis; L-histidine from 5-phospho-alpha-D-ribose 1-diphosphate: step 1/9. Required for the first step of histidine biosynthesis. May allow the feedback regulation of ATP phosphoribosyltransferase activity by histidine. This Bacillus cereus (strain AH820) protein is ATP phosphoribosyltransferase regulatory subunit.